Here is a 1549-residue protein sequence, read N- to C-terminus: Zinc finger MYM-type protein 4 (1549 aa).

A2 is subject to N-acetylalanine. The segment at 83 to 108 (VVSSDNEDEQDCSSKDNLVSSVHTDG) is disordered. The segment covering 97–106 (KDNLVSSVHT) has biased composition (polar residues). Residue T106 is modified to Phosphothreonine. 2 positions are modified to phosphoserine: S109 and S121. Glycyl lysine isopeptide (Lys-Gly) (interchain with G-Cter in SUMO2) cross-links involve residues K139 and K148. S161 carries the phosphoserine modification. K195 participates in a covalent cross-link: Glycyl lysine isopeptide (Lys-Gly) (interchain with G-Cter in SUMO2). A Phosphoserine modification is found at S197. Residues K201 and K232 each participate in a glycyl lysine isopeptide (Lys-Gly) (interchain with G-Cter in SUMO2) cross-link. At S242 the chain carries Phosphoserine. K250 participates in a covalent cross-link: Glycyl lysine isopeptide (Lys-Gly) (interchain with G-Cter in SUMO1); alternate. A Glycyl lysine isopeptide (Lys-Gly) (interchain with G-Cter in SUMO2); alternate cross-link involves residue K250. The segment at 267–291 (GLLDRVKDEPDNAQEYSHGQQQKTQ) is disordered. Glycyl lysine isopeptide (Lys-Gly) (interchain with G-Cter in SUMO2) cross-links involve residues K273, K289, K327, K400, K428, and K430. The segment covering 280–290 (QEYSHGQQQKT) has biased composition (polar residues). 9 MYM-type zinc fingers span residues 362–402 (QLFC…PKDV), 414–457 (KDFC…RHEV), 464–499 (HKLC…GSGQ), 510–544 (KKFC…AEMI), 554–592 (ELFC…QYHL), 600–631 (RNFC…LSQG), 708–742 (FQFC…KETV), 749–788 (KSFC…LIQN), and 795–829 (EDFC…SESL). Residues K1035 and K1062 each participate in a glycyl lysine isopeptide (Lys-Gly) (interchain with G-Cter in SUMO2) cross-link. Residues S1065 and S1072 each carry the phosphoserine modification. Residues K1081 and K1128 each participate in a glycyl lysine isopeptide (Lys-Gly) (interchain with G-Cter in SUMO2) cross-link. Positions 1124–1185 (DSELKPFSKG…RRGRKKSVVP (62 aa)) are disordered. Over residues 1125–1135 (SELKPFSKGET) the composition is skewed to basic and acidic residues. Positions 1161–1182 (SRTRRRHRDGFPQPRRRGRKKS) are enriched in basic residues. 2 positions are modified to phosphoserine: S1182 and S1257. Residue K1432 forms a Glycyl lysine isopeptide (Lys-Gly) (interchain with G-Cter in SUMO2) linkage. A phosphoserine mark is found at S1540, S1543, and S1548.

In terms of biological role, plays a role in the regulation of cell morphology and cytoskeletal organization. In Mus musculus (Mouse), this protein is Zinc finger MYM-type protein 4 (Zmym4).